A 475-amino-acid chain; its full sequence is Putative histidine permease (475 aa).

The next 12 membrane-spanning stretches (helical) occupy residues 20–40 (LFMI…TGYT), 44–64 (AGPG…YLVM), 87–107 (FIGP…WVVT), 127–147 (SVWM…AFSV), 162–182 (IVTI…LISL), 199–219 (GLFP…SFAF), 246–266 (VAWR…GLIS), 277–297 (FVAV…NFVI), 341–361 (ALMI…VAPG), 363–383 (VYVV…MSIA), 410–430 (YPLM…GLAF), and 434–454 (QRIA…IYHF).

The protein belongs to the amino acid-polyamine-organocation (APC) superfamily.

It localises to the cell membrane. This is Putative histidine permease (hutM) from Bacillus subtilis (strain 168).